A 535-amino-acid chain; its full sequence is Light-independent protochlorophyllide reductase subunit B (535 aa).

Position 36 (D36) interacts with [4Fe-4S] cluster. Catalysis depends on D292, which acts as the Proton donor. Substrate is bound at residue 428–429 (GL). The interval 446–483 (DEASPSESAPHASNGHEDVAGGSTAQSVPSHAATEGDG) is disordered.

It belongs to the ChlB/BchB/BchZ family. As to quaternary structure, protochlorophyllide reductase is composed of three subunits; BchL, BchN and BchB. Forms a heterotetramer of two BchB and two BchN subunits. The cofactor is [4Fe-4S] cluster.

It carries out the reaction chlorophyllide a + oxidized 2[4Fe-4S]-[ferredoxin] + 2 ADP + 2 phosphate = protochlorophyllide a + reduced 2[4Fe-4S]-[ferredoxin] + 2 ATP + 2 H2O. The protein operates within porphyrin-containing compound metabolism; bacteriochlorophyll biosynthesis (light-independent). In terms of biological role, component of the dark-operative protochlorophyllide reductase (DPOR) that uses Mg-ATP and reduced ferredoxin to reduce ring D of protochlorophyllide (Pchlide) to form chlorophyllide a (Chlide). This reaction is light-independent. The NB-protein (BchN-BchB) is the catalytic component of the complex. The sequence is that of Light-independent protochlorophyllide reductase subunit B from Chlorobium limicola (strain DSM 245 / NBRC 103803 / 6330).